The primary structure comprises 161 residues: EP300-interacting inhibitor of differentiation 2B (161 aa).

Disordered regions lie at residues 1–26 (MAEP…GTAS) and 54–77 (ARSM…GLAS).

As to quaternary structure, homodimer and heterodimer with EID2. Interacts with HDAC1 and HDAC2.

The protein localises to the nucleus. Acts as a repressor of MYOD-dependent transcription, glucocorticoid receptor-dependent transcription, and muscle differentiation. This is EP300-interacting inhibitor of differentiation 2B from Homo sapiens (Human).